Here is a 521-residue protein sequence, read N- to C-terminus: MEELQLQGYLEKDGSRQQNFLYPLIFQEYIYTLAHDHGLNSSIFYEPMEIVGLGYDNKSSSVLVKRLITRMYQQNSLIYSMNDFNQNRFVGHNNSFYSNFDSQMVSEGFAVIVEIPFSLRLVPSSEEIQIPKSQNLRSIHSIFPFLEDKLSHLNYVLDILIPYPIHLEILVQILQCWIQDVPSLHFLRFFLHEFHNWNNLNLITPTKSISVFSKENKRLFWILYNSYVSEYEFLFVFLRKQSYYLRSTSSRAFLERTHFYVKIEHLIDVCHNHFQKILWFFKDSFMHYVRYKGKAILASRGTYLLIKKWKCYLVNFWQYNFHFWSKPYRIHINPFSNYSFYFLGYISSVLINPSAVKNQMLENFYLVDTLTQKFDTIVPVIPLIGSLSKAKFCTILGHPISKPIWAELSDSDIMDRFGRICRNLSHYHSGSSKKQSLYRIKYILRLSCARTLARKHKSTVRNLLQRLGSGLLEEFFTEEEQVISPIFPKTTLFPLHGSHRERIWYLDIIRINDLANYLDWS.

The protein belongs to the intron maturase 2 family. MatK subfamily.

It is found in the plastid. The protein localises to the chloroplast. Functionally, usually encoded in the trnK tRNA gene intron. Probably assists in splicing its own and other chloroplast group II introns. In Trillium catesbaei (Catesby's trillium), this protein is Maturase K.